A 339-amino-acid chain; its full sequence is Extracellular matrix protein-binding protein emp (339 aa).

Residues 1 to 26 (MKKKLFVLTMSTLFATQLINSNHANA) form the signal peptide.

Its subcellular location is the cell surface. Adhesin that binds to the host cell extracellular matrix proteins fibronectin, fibrinogen, collagen, and vitronectin. In Staphylococcus aureus (strain bovine RF122 / ET3-1), this protein is Extracellular matrix protein-binding protein emp (emp).